Consider the following 138-residue polypeptide: ATP synthase epsilon chain (138 aa).

Belongs to the ATPase epsilon chain family. As to quaternary structure, F-type ATPases have 2 components, CF(1) - the catalytic core - and CF(0) - the membrane proton channel. CF(1) has five subunits: alpha(3), beta(3), gamma(1), delta(1), epsilon(1). CF(0) has three main subunits: a, b and c.

It localises to the cell inner membrane. Functionally, produces ATP from ADP in the presence of a proton gradient across the membrane. This is ATP synthase epsilon chain from Methylibium petroleiphilum (strain ATCC BAA-1232 / LMG 22953 / PM1).